The following is a 158-amino-acid chain: Large ribosomal subunit protein uL13 (158 aa).

This sequence belongs to the universal ribosomal protein uL13 family. As to quaternary structure, part of the 50S ribosomal subunit.

In terms of biological role, this protein is one of the early assembly proteins of the 50S ribosomal subunit, although it is not seen to bind rRNA by itself. It is important during the early stages of 50S assembly. The protein is Large ribosomal subunit protein uL13 of Rickettsia canadensis (strain McKiel).